Here is a 463-residue protein sequence, read N- to C-terminus: L-cystine uptake protein TcyP (463 aa).

The next 10 membrane-spanning stretches (helical) occupy residues 3-23 (TLLV…LFVM), 34-54 (VFTA…IYGP), 73-93 (YVKL…LGAF), 105-125 (ISGL…AVGI), 184-204 (PTST…FLGV), 225-245 (IVMR…LAIM), 262-282 (MFVI…LLLL), 338-358 (LSIG…MMIA), 369-389 (VFII…AGVG), and 394-414 (FAAL…GLLI).

The protein belongs to the dicarboxylate/amino acid:cation symporter (DAACS) (TC 2.A.23) family.

Its subcellular location is the cell membrane. In terms of biological role, mediates uptake of L-cystine, the oxidized form of L-cysteine. Although it is more specific for L-cystine, it could also transport a much broader range of amino acids and sulfur compounds including S-methylcysteine. The chain is L-cystine uptake protein TcyP (tcyP) from Bacillus subtilis (strain 168).